Here is a 2209-residue protein sequence, read N- to C-terminus: Genome polyprotein (2209 aa).

The N-myristoyl glycine; by host moiety is linked to residue G2. Over 2-1520 (GAQVSSQKVG…NINRAMTILQ (1519 aa)) the chain is Cytoplasmic. Residues 580–600 (GLGQMLESMIDNTVRETVGAA) are amphipathic alpha-helix. Residues 599–619 (AATSRDALPNTEASGPTHSKE) are disordered. Catalysis depends on for protease 2A activity residues H901 and D919. Zn(2+) contacts are provided by C936 and C938. The For protease 2A activity role is filled by C990. Residues C996 and H998 each contribute to the Zn(2+) site. The segment at 1128–1200 (GDSWLKKFTE…HQSCPSQEHQ (73 aa)) is membrane-binding. The segment at 1128-1266 (GDSWLKKFTE…SPGTGKSVAT (139 aa)) is oligomerization. The tract at residues 1149–1153 (SNKIS) is RNA-binding. The SF3 helicase domain occupies 1232–1388 (EHTINNYIQF…NEYSRDGKLN (157 aa)). 1256–1263 (GSPGTGKS) serves as a coordination point for ATP. Residues C1396, C1399, C1408, and C1413 each coordinate Zn(2+). Residues 1396-1413 (CKNCHQPANFKRCCPLVC) form a C4-type zinc finger. The interval 1440–1447 (ERNRRSNI) is RNA-binding. The oligomerization stretch occupies residues 1451-1456 (MEALFQ). An intramembrane segment occupies 1521-1536 (AVTTFAAVAGVVYVMY). The Cytoplasmic segment spans residues 1537–2209 (KLFAGHQGAY…TLYRRWLDSF (673 aa)). Position 1546 is an O-(5'-phospho-RNA)-tyrosine (Y1546). An O-UMP-tyrosine; transient modification is found at Y1546. The Peptidase C3 domain occupies 1566 to 1744 (GPGFDYAVAM…FAAALKRSYF (179 aa)). Residues H1605, E1636, and C1712 each act as for protease 3C activity in the active site. One can recognise a RdRp catalytic domain in the interval 1975–2090 (EKLFAFDYTG…SYPHEVDASL (116 aa)). 2 residues coordinate Mg(2+): D1981 and D2076.

Belongs to the picornaviruses polyprotein family. Interacts with capsid protein VP1 and capsid protein VP3 to form heterotrimeric protomers. In terms of assembly, interacts with capsid protein VP0, and capsid protein VP3 to form heterotrimeric protomers. Five protomers subsequently associate to form pentamers which serve as building blocks for the capsid. Interacts with capsid protein VP2, capsid protein VP3 and capsid protein VP4 following cleavage of capsid protein VP0. Interacts with human PVR. As to quaternary structure, interacts with capsid protein VP1 and capsid protein VP3 in the mature capsid. Interacts with capsid protein VP0 and capsid protein VP1 to form heterotrimeric protomers. Five protomers subsequently associate to form pentamers which serve as building blocks for the capsid. Interacts with capsid protein VP4 in the mature capsid. Interacts with protein 2C; this interaction may be important for virion morphogenesis. In terms of assembly, interacts with capsid protein VP1 and capsid protein VP3. As to quaternary structure, homodimer. Homohexamer; forms a hexameric ring structure with 6-fold symmetry characteristic of AAA+ ATPases. Interacts (via N-terminus) with host RTN3 (via reticulon domain); this interaction is important for viral replication. Interacts with capsid protein VP3; this interaction may be important for virion morphogenesis. In terms of assembly, interacts with protein 3CD. As to quaternary structure, homodimer. Interacts with host GBF1. Interacts (via GOLD domain) with host ACBD3 (via GOLD domain); this interaction allows the formation of a viral protein 3A/ACBD3 heterotetramer with a 2:2 stoichiometry, which will stimulate the recruitment of host PI4KB in order to synthesize PI4P at the viral RNA replication sites. Interacts with RNA-directed RNA polymerase. In terms of assembly, interacts with protein 3AB and with RNA-directed RNA polymerase. As to quaternary structure, interacts with Viral protein genome-linked and with protein 3CD. Requires Mg(2+) as cofactor. Specific enzymatic cleavages in vivo by the viral proteases yield processing intermediates and the mature proteins. Post-translationally, myristoylation is required for the formation of pentamers during virus assembly. Further assembly of 12 pentamers and a molecule of genomic RNA generates the provirion. In terms of processing, during virion maturation, immature virions are rendered infectious following cleavage of VP0 into VP4 and VP2. This maturation seems to be an autocatalytic event triggered by the presence of RNA in the capsid and it is followed by a conformational change infectious virion. Myristoylation is required during RNA encapsidation and formation of the mature virus particle. Post-translationally, VPg is uridylylated by the polymerase into VPg-pUpU. This acts as a nucleotide-peptide primer for the genomic RNA replication.

The protein localises to the virion. It is found in the host cytoplasm. Its subcellular location is the host cytoplasmic vesicle membrane. It localises to the host nucleus. It catalyses the reaction RNA(n) + a ribonucleoside 5'-triphosphate = RNA(n+1) + diphosphate. The enzyme catalyses Selective cleavage of Tyr-|-Gly bond in the picornavirus polyprotein.. It carries out the reaction a ribonucleoside 5'-triphosphate + H2O = a ribonucleoside 5'-diphosphate + phosphate + H(+). The catalysed reaction is Selective cleavage of Gln-|-Gly bond in the poliovirus polyprotein. In other picornavirus reactions Glu may be substituted for Gln, and Ser or Thr for Gly.. Its activity is regulated as follows. Replication or transcription is subject to high level of random mutations by the nucleotide analog ribavirin. Forms an icosahedral capsid of pseudo T=3 symmetry with capsid proteins VP2 and VP3. The capsid is 300 Angstroms in diameter, composed of 60 copies of each capsid protein and enclosing the viral positive strand RNA genome. Capsid protein VP1 mainly forms the vertices of the capsid. Capsid protein VP1 interacts with host cell receptor PVR to provide virion attachment to target host epithelial cells. This attachment induces virion internalization predominantly through clathrin- and caveolin-independent endocytosis in Hela cells and through caveolin-mediated endocytosis in brain microvascular endothelial cells. Tyrosine kinases are probably involved in the entry process. Virus binding to PVR induces increased junctional permeability and rearrangement of junctional proteins. Modulation of endothelial tight junctions, as well as cytolytic infection of endothelial cells themselves, may result in loss of endothelial integrity which may help the virus to reach the CNS. After binding to its receptor, the capsid undergoes conformational changes. Capsid protein VP1 N-terminus (that contains an amphipathic alpha-helix) and capsid protein VP4 are externalized. Together, they shape a pore in the host membrane through which viral genome is translocated to host cell cytoplasm. Functionally, forms an icosahedral capsid of pseudo T=3 symmetry with capsid proteins VP1 and VP3. The capsid is 300 Angstroms in diameter, composed of 60 copies of each capsid protein and enclosing the viral positive strand RNA genome. In terms of biological role, forms an icosahedral capsid of pseudo T=3 symmetry with capsid proteins VP2 and VP1. The capsid is 300 Angstroms in diameter, composed of 60 copies of each capsid protein and enclosing the viral positive strand RNA genome. Its function is as follows. Lies on the inner surface of the capsid shell. After binding to the host receptor, the capsid undergoes conformational changes. Capsid protein VP4 is released, Capsid protein VP1 N-terminus is externalized, and together, they shape a pore in the host membrane through which the viral genome is translocated into the host cell cytoplasm. Component of immature procapsids, which is cleaved into capsid proteins VP4 and VP2 after maturation. Allows the capsid to remain inactive before the maturation step. Functionally, cysteine protease that cleaves viral polyprotein and specific host proteins. It is responsible for the autocatalytic cleavage between the P1 and P2 regions, which is the first cleavage occurring in the polyprotein. Also cleaves the host translation initiation factor EIF4G1, in order to shut down the capped cellular mRNA translation. Inhibits the host nucleus-cytoplasm protein and RNA trafficking by cleaving host members of the nuclear pores including NUP98, NUP62 and NUP153. Counteracts stress granule formation probably by antagonizing its assembly or promoting its dissassembly. Cleaves and inhibits host IFIH1/MDA5, thereby inhibiting the type-I IFN production and the establishment of the antiviral state. Cleaves and inhibits host MAVS, thereby inhibiting the type-I IFN production and the establishment of the antiviral state. In terms of biological role, plays an essential role in the virus replication cycle by acting as a viroporin. Creates a pore in the host endoplasmic reticulum and as a consequence releases Ca2+ in the cytoplasm of infected cell. In turn, high levels of cytoplasmic calcium may trigger membrane trafficking and transport of viral ER-associated proteins to viroplasms, sites of viral genome replication. Its function is as follows. Induces and associates with structural rearrangements of intracellular membranes. Displays RNA-binding, nucleotide binding and NTPase activities. May play a role in virion morphogenesis and viral RNA encapsidation by interacting with the capsid protein VP3. Localizes the viral replication complex to the surface of membranous vesicles. Together with protein 3CD binds the Cis-Active RNA Element (CRE) which is involved in RNA synthesis initiation. Acts as a cofactor to stimulate the activity of 3D polymerase, maybe through a nucleid acid chaperone activity. Functionally, localizes the viral replication complex to the surface of membranous vesicles. It inhibits host cell endoplasmic reticulum-to-Golgi apparatus transport and causes the disassembly of the Golgi complex, possibly through GBF1 interaction. This would result in depletion of MHC, trail receptors and IFN receptors at the host cell surface. Plays an essential role in viral RNA replication by recruiting ACBD3 and PI4KB at the viral replication sites, thereby allowing the formation of the rearranged membranous structures where viral replication takes place. In terms of biological role, acts as a primer for viral RNA replication and remains covalently bound to viral genomic RNA. VPg is uridylylated prior to priming replication into VPg-pUpU. The oriI viral genomic sequence may act as a template for this. The VPg-pUpU is then used as primer on the genomic RNA poly(A) by the RNA-dependent RNA polymerase to replicate the viral genome. During genome replication, the VPg-RNA linkage is removed by the host TDP2, thereby accelerating replication. During the late stage of the replication cycle, host TDP2 is excluded from sites of viral RNA synthesis and encapsidation, allowing for the generation of progeny virions. Its function is as follows. Involved in the viral replication complex and viral polypeptide maturation. It exhibits protease activity with a specificity and catalytic efficiency that is different from protease 3C. Protein 3CD binds to the 5'UTR of the viral genome. Major viral protease that mediates proteolytic processing of the polyprotein. Cleaves host EIF5B, contributing to host translation shutoff. Cleaves also host PABPC1, contributing to host translation shutoff. Cleaves host RIGI and thus contributes to the inhibition of type I interferon production. Cleaves host NLRP1, triggers host N-glycine-mediated degradation of the autoinhibitory NLRP1 N-terminal fragment. Inhibits the integrated stress response (ISR) in the infected cell by cleaving host G3BP1. Stress granule formation is thus inhibited, which allows protein synthesis and viral replication. Functionally, replicates the viral genomic RNA on the surface of intracellular membranes. May form linear arrays of subunits that propagate along a strong head-to-tail interaction called interface-I. Covalently attaches UMP to a tyrosine of VPg, which is used to prime RNA synthesis. The positive stranded RNA genome is first replicated at virus induced membranous vesicles, creating a dsRNA genomic replication form. This dsRNA is then used as template to synthesize positive stranded RNA genomes. ss(+)RNA genomes are either translated, replicated or encapsidated. This chain is Genome polyprotein, found in Homo sapiens (Human).